The following is a 555-amino-acid chain: Sulfite reductase [NADPH] hemoprotein beta-component (555 aa).

[4Fe-4S] cluster-binding residues include cysteine 430, cysteine 436, cysteine 475, and cysteine 479. Position 479 (cysteine 479) interacts with siroheme.

The protein belongs to the nitrite and sulfite reductase 4Fe-4S domain family. In terms of assembly, alpha(8)-beta(8). The alpha component is a flavoprotein, the beta component is a hemoprotein. Siroheme serves as cofactor. The cofactor is [4Fe-4S] cluster.

The catalysed reaction is hydrogen sulfide + 3 NADP(+) + 3 H2O = sulfite + 3 NADPH + 4 H(+). The protein operates within sulfur metabolism; hydrogen sulfide biosynthesis; hydrogen sulfide from sulfite (NADPH route): step 1/1. Component of the sulfite reductase complex that catalyzes the 6-electron reduction of sulfite to sulfide. This is one of several activities required for the biosynthesis of L-cysteine from sulfate. This chain is Sulfite reductase [NADPH] hemoprotein beta-component, found in Leptospira biflexa serovar Patoc (strain Patoc 1 / Ames).